The primary structure comprises 397 residues: Argininosuccinate synthase (397 aa).

7–15 (LYSGGLDTS) contacts ATP. Residue Y83 coordinates L-citrulline. An ATP-binding site is contributed by G113. 3 residues coordinate L-aspartate: T115, N119, and D120. An L-citrulline-binding site is contributed by N119. R123, S169, S178, E253, and Y265 together coordinate L-citrulline.

The protein belongs to the argininosuccinate synthase family. Type 1 subfamily. As to quaternary structure, homotetramer.

The protein resides in the cytoplasm. It catalyses the reaction L-citrulline + L-aspartate + ATP = 2-(N(omega)-L-arginino)succinate + AMP + diphosphate + H(+). It participates in amino-acid biosynthesis; L-arginine biosynthesis; L-arginine from L-ornithine and carbamoyl phosphate: step 2/3. This chain is Argininosuccinate synthase, found in Thermoplasma volcanium (strain ATCC 51530 / DSM 4299 / JCM 9571 / NBRC 15438 / GSS1).